Reading from the N-terminus, the 179-residue chain is Ribosome maturation factor RimM (179 aa).

The PRC barrel domain occupies P98 to L170.

The protein belongs to the RimM family. As to quaternary structure, binds ribosomal protein uS19.

Its subcellular location is the cytoplasm. Functionally, an accessory protein needed during the final step in the assembly of 30S ribosomal subunit, possibly for assembly of the head region. Essential for efficient processing of 16S rRNA. May be needed both before and after RbfA during the maturation of 16S rRNA. It has affinity for free ribosomal 30S subunits but not for 70S ribosomes. The sequence is that of Ribosome maturation factor RimM from Cutibacterium acnes (strain DSM 16379 / KPA171202) (Propionibacterium acnes).